We begin with the raw amino-acid sequence, 353 residues long: Photosystem II protein D1 (353 aa).

An N-acetylthreonine modification is found at Thr-2. The residue at position 2 (Thr-2) is a Phosphothreonine. 3 helical membrane passes run 29–46 (YIGWFGVLMIPTLLTATS), 118–133 (HFLLGVACYMGREWEL), and 142–156 (WIAVAYSAPVAAATA). His-118 contacts chlorophyll a. Pheophytin a is bound at residue Tyr-126. [CaMn4O5] cluster is bound by residues Asp-170 and Glu-189. The helical transmembrane segment at 197–218 (FHMLGVAGVFGGSLFSAMHGSL) threads the bilayer. His-198 is a chlorophyll a binding site. A quinone contacts are provided by residues His-215 and 264 to 265 (SF). His-215 provides a ligand contact to Fe cation. Position 272 (His-272) interacts with Fe cation. A helical membrane pass occupies residues 274-288 (FLAAWPVVGIWFTAL). Residues His-332, Glu-333, Asp-342, and Ala-344 each coordinate [CaMn4O5] cluster. The propeptide occupies 345–353 (AVEAPAVNG).

This sequence belongs to the reaction center PufL/M/PsbA/D family. In terms of assembly, PSII is composed of 1 copy each of membrane proteins PsbA, PsbB, PsbC, PsbD, PsbE, PsbF, PsbH, PsbI, PsbJ, PsbK, PsbL, PsbM, PsbT, PsbX, PsbY, PsbZ, Psb30/Ycf12, at least 3 peripheral proteins of the oxygen-evolving complex and a large number of cofactors. It forms dimeric complexes. The cofactor is The D1/D2 heterodimer binds P680, chlorophylls that are the primary electron donor of PSII, and subsequent electron acceptors. It shares a non-heme iron and each subunit binds pheophytin, quinone, additional chlorophylls, carotenoids and lipids. D1 provides most of the ligands for the Mn4-Ca-O5 cluster of the oxygen-evolving complex (OEC). There is also a Cl(-1) ion associated with D1 and D2, which is required for oxygen evolution. The PSII complex binds additional chlorophylls, carotenoids and specific lipids.. Post-translationally, tyr-161 forms a radical intermediate that is referred to as redox-active TyrZ, YZ or Y-Z. C-terminally processed by CTPA; processing is essential to allow assembly of the oxygen-evolving complex and thus photosynthetic growth.

It localises to the plastid. The protein resides in the chloroplast thylakoid membrane. It catalyses the reaction 2 a plastoquinone + 4 hnu + 2 H2O = 2 a plastoquinol + O2. In terms of biological role, photosystem II (PSII) is a light-driven water:plastoquinone oxidoreductase that uses light energy to abstract electrons from H(2)O, generating O(2) and a proton gradient subsequently used for ATP formation. It consists of a core antenna complex that captures photons, and an electron transfer chain that converts photonic excitation into a charge separation. The D1/D2 (PsbA/PsbD) reaction center heterodimer binds P680, the primary electron donor of PSII as well as several subsequent electron acceptors. This Conocephalum conicum (Snakeskin liverwort) protein is Photosystem II protein D1.